The sequence spans 249 residues: Secreted flagellin C (249 aa).

The secreted form is about 1 kDa larger than the whole cell lysate form, presumably due to post-translational modification. A 22 kDa form is also found in the secreted fraction, probably resulting from proteolysis.

The protein localises to the secreted. It is found in the host cell surface. Its function is as follows. Plays a role in virulence. The chain is Secreted flagellin C (flaC) from Campylobacter jejuni subsp. jejuni serotype O:2 (strain ATCC 700819 / NCTC 11168).